We begin with the raw amino-acid sequence, 236 residues long: OPEP-2 protein (236 aa).

In Orgyia pseudotsugata (Douglas-fir tussock moth), this protein is OPEP-2 protein (OPEP-2).